The primary structure comprises 426 residues: Serine--tRNA ligase (426 aa).

An L-serine-binding site is contributed by 233-235 (TSE). Position 264 to 266 (264 to 266 (RSE)) interacts with ATP. Glu-287 serves as a coordination point for L-serine. 351–354 (EISS) contacts ATP. Ser-387 is a binding site for L-serine.

It belongs to the class-II aminoacyl-tRNA synthetase family. Type-1 seryl-tRNA synthetase subfamily. Homodimer. The tRNA molecule binds across the dimer.

It is found in the cytoplasm. The catalysed reaction is tRNA(Ser) + L-serine + ATP = L-seryl-tRNA(Ser) + AMP + diphosphate + H(+). The enzyme catalyses tRNA(Sec) + L-serine + ATP = L-seryl-tRNA(Sec) + AMP + diphosphate + H(+). It functions in the pathway aminoacyl-tRNA biosynthesis; selenocysteinyl-tRNA(Sec) biosynthesis; L-seryl-tRNA(Sec) from L-serine and tRNA(Sec): step 1/1. In terms of biological role, catalyzes the attachment of serine to tRNA(Ser). Is also able to aminoacylate tRNA(Sec) with serine, to form the misacylated tRNA L-seryl-tRNA(Sec), which will be further converted into selenocysteinyl-tRNA(Sec). The chain is Serine--tRNA ligase from Colwellia psychrerythraea (strain 34H / ATCC BAA-681) (Vibrio psychroerythus).